The chain runs to 248 residues: PF03932 family protein CutC (248 aa).

This sequence belongs to the CutC family.

It is found in the cytoplasm. This is PF03932 family protein CutC from Citrobacter koseri (strain ATCC BAA-895 / CDC 4225-83 / SGSC4696).